Here is a 343-residue protein sequence, read N- to C-terminus: Thioredoxin domain-containing protein 15 (343 aa).

An N-terminal signal peptide occupies residues 1–20 (MQLLCWWQILLWVLGLPARG). The Extracellular portion of the chain corresponds to 21-304 (LEEDSGHTWQ…GPLPSTLVKT (284 aa)). Residues 86-95 (EDQRSTEAHD) are compositionally biased toward basic and acidic residues. A disordered region spans residues 86-112 (EDQRSTEAHDGTCSAQGDEDPRCGGRE). The 118-residue stretch at 162 to 279 (ERNVTGLENF…LKIFIFNQTG (118 aa)) folds into the Thioredoxin domain. Residues N170, N177, N189, and N276 are each glycosylated (N-linked (GlcNAc...) asparagine). Residues 305 to 325 (VDWLLVFSLFFLISFIMYATI) form a helical membrane-spanning segment. Topologically, residues 326–343 (RTESIRWLIPGQEQEHAE) are cytoplasmic.

The protein resides in the cell projection. It is found in the cilium membrane. Acts as a positive regulator of ciliary hedgehog signaling. Required for cilia biogenesis. The chain is Thioredoxin domain-containing protein 15 (Txndc15) from Rattus norvegicus (Rat).